A 266-amino-acid polypeptide reads, in one-letter code: Cyclin-C (266 aa).

The Cyclin N-terminal domain occupies 47–151; that stretch reads IIQVLGEQLK…LLENLDCCLI (105 aa).

Belongs to the cyclin family. Cyclin C subfamily. As to quaternary structure, component of the Cdk8 module of the Mediator complex.

Its subcellular location is the nucleus. In terms of biological role, component of the Mediator complex, a coactivator involved in regulated gene transcription of nearly all RNA polymerase II-dependent genes. Mediator functions as a bridge to convey information from gene-specific regulatory proteins to the basal RNA polymerase II transcription machinery. Mediator is recruited to promoters by direct interactions with regulatory proteins and serves as a scaffold for the assembly of a functional preinitiation complex with RNA polymerase II and the general transcription factors. Binds to and activates cyclin-dependent kinase Cdk8 that phosphorylates the CTD (C-terminal domain) of the large subunit of RNA polymerase II (RNAp II), which may inhibit the formation of a transcription initiation complex. This Anopheles gambiae (African malaria mosquito) protein is Cyclin-C (CycC).